The following is a 255-amino-acid chain: 1-(5-phosphoribosyl)-5-[(5-phosphoribosylamino)methylideneamino] imidazole-4-carboxamide isomerase (255 aa).

Asp12 (proton acceptor) is an active-site residue. The active-site Proton donor is Asp131.

This sequence belongs to the HisA/HisF family.

The protein localises to the cytoplasm. It carries out the reaction 1-(5-phospho-beta-D-ribosyl)-5-[(5-phospho-beta-D-ribosylamino)methylideneamino]imidazole-4-carboxamide = 5-[(5-phospho-1-deoxy-D-ribulos-1-ylimino)methylamino]-1-(5-phospho-beta-D-ribosyl)imidazole-4-carboxamide. Its pathway is amino-acid biosynthesis; L-histidine biosynthesis; L-histidine from 5-phospho-alpha-D-ribose 1-diphosphate: step 4/9. This Cutibacterium acnes (strain DSM 16379 / KPA171202) (Propionibacterium acnes) protein is 1-(5-phosphoribosyl)-5-[(5-phosphoribosylamino)methylideneamino] imidazole-4-carboxamide isomerase.